Reading from the N-terminus, the 29-residue chain is GILDSLKNLAKNAGQILLNKASCKLSGQC.

Cys-23 and Cys-29 are disulfide-bonded.

This sequence belongs to the frog skin active peptide (FSAP) family. Brevinin subfamily. In terms of tissue distribution, expressed by the skin glands.

It localises to the secreted. Shows antibacterial activity against representative Gram-negative and Gram-positive bacterial species, and hemolytic activity. The sequence is that of Brevinin-2Ed from Pelophylax lessonae (Pool frog).